The sequence spans 140 residues: Large ribosomal subunit protein uL11 (140 aa).

The protein belongs to the universal ribosomal protein uL11 family. As to quaternary structure, part of the ribosomal stalk of the 50S ribosomal subunit. Interacts with L10 and the large rRNA to form the base of the stalk. L10 forms an elongated spine to which L12 dimers bind in a sequential fashion forming a multimeric L10(L12)X complex. Post-translationally, one or more lysine residues are methylated.

Functionally, forms part of the ribosomal stalk which helps the ribosome interact with GTP-bound translation factors. In Halothermothrix orenii (strain H 168 / OCM 544 / DSM 9562), this protein is Large ribosomal subunit protein uL11.